Reading from the N-terminus, the 362-residue chain is 3-dehydroquinate synthase (362 aa).

NAD(+)-binding positions include 71 to 76, 105 to 109, 129 to 130, K142, K151, and 169 to 172; these read DGEKYK, GVIGD, TT, and CLKT. E184, H247, and H264 together coordinate Zn(2+).

It belongs to the sugar phosphate cyclases superfamily. Dehydroquinate synthase family. Co(2+) is required as a cofactor. Zn(2+) serves as cofactor. It depends on NAD(+) as a cofactor.

The protein localises to the cytoplasm. The enzyme catalyses 7-phospho-2-dehydro-3-deoxy-D-arabino-heptonate = 3-dehydroquinate + phosphate. It participates in metabolic intermediate biosynthesis; chorismate biosynthesis; chorismate from D-erythrose 4-phosphate and phosphoenolpyruvate: step 2/7. Functionally, catalyzes the conversion of 3-deoxy-D-arabino-heptulosonate 7-phosphate (DAHP) to dehydroquinate (DHQ). This chain is 3-dehydroquinate synthase, found in Citrobacter koseri (strain ATCC BAA-895 / CDC 4225-83 / SGSC4696).